A 378-amino-acid polypeptide reads, in one-letter code: Calponin homolog OV9M (378 aa).

The span at 1–20 (MPAQPAQENAQDADDAQANA) shows a compositional bias: low complexity. Residues 1 to 35 (MPAQPAQENAQDADDAQANATMETRVAGQGQPKRV) are disordered. 7 Calponin-like repeats span residues 50–75 (IPSQ…RNTQ), 98–123 (VRLQ…RDVC), 151–176 (VRLQ…RRET), 197–222 (IPLQ…RRET), 244–269 (IPSQ…RWEV), 285–310 (VRLQ…RNTT), and 330–355 (IPSQ…RDVK). The tract at residues 175–194 (ETTKMTDSKHPDYDHERPDQ) is disordered. The interval 230-256 (HPEYDPESSIDSSTIPSQMGSNKYASQ) is disordered. Over residues 238–256 (SIDSSTIPSQMGSNKYASQ) the composition is skewed to polar residues. A disordered region spans residues 331–352 (PSQAGWNRGDSQKGMTGFGAPR).

It belongs to the calponin family. As to expression, found in the longitudinal muscles below the hypodermis.

In terms of biological role, could be involved in muscle contraction. The sequence is that of Calponin homolog OV9M from Onchocerca volvulus.